Reading from the N-terminus, the 254-residue chain is Pyrroloquinoline-quinone synthase (254 aa).

This sequence belongs to the PqqC family.

It catalyses the reaction 6-(2-amino-2-carboxyethyl)-7,8-dioxo-1,2,3,4,7,8-hexahydroquinoline-2,4-dicarboxylate + 3 O2 = pyrroloquinoline quinone + 2 H2O2 + 2 H2O + H(+). It participates in cofactor biosynthesis; pyrroloquinoline quinone biosynthesis. Ring cyclization and eight-electron oxidation of 3a-(2-amino-2-carboxyethyl)-4,5-dioxo-4,5,6,7,8,9-hexahydroquinoline-7,9-dicarboxylic-acid to PQQ. This is Pyrroloquinoline-quinone synthase from Rhodopseudomonas palustris (strain TIE-1).